Here is a 268-residue protein sequence, read N- to C-terminus: Ribosomal RNA small subunit methyltransferase A (268 aa).

Positions 18, 20, 45, 66, 91, and 112 each coordinate S-adenosyl-L-methionine.

This sequence belongs to the class I-like SAM-binding methyltransferase superfamily. rRNA adenine N(6)-methyltransferase family. RsmA subfamily.

It is found in the cytoplasm. It catalyses the reaction adenosine(1518)/adenosine(1519) in 16S rRNA + 4 S-adenosyl-L-methionine = N(6)-dimethyladenosine(1518)/N(6)-dimethyladenosine(1519) in 16S rRNA + 4 S-adenosyl-L-homocysteine + 4 H(+). Functionally, specifically dimethylates two adjacent adenosines (A1518 and A1519) in the loop of a conserved hairpin near the 3'-end of 16S rRNA in the 30S particle. May play a critical role in biogenesis of 30S subunits. This Shewanella oneidensis (strain ATCC 700550 / JCM 31522 / CIP 106686 / LMG 19005 / NCIMB 14063 / MR-1) protein is Ribosomal RNA small subunit methyltransferase A.